The primary structure comprises 308 residues: Elongation factor Ts (308 aa).

The tract at residues 80–83 (TDFV) is involved in Mg(2+) ion dislocation from EF-Tu.

Belongs to the EF-Ts family.

Its subcellular location is the cytoplasm. Functionally, associates with the EF-Tu.GDP complex and induces the exchange of GDP to GTP. It remains bound to the aminoacyl-tRNA.EF-Tu.GTP complex up to the GTP hydrolysis stage on the ribosome. The protein is Elongation factor Ts of Verminephrobacter eiseniae (strain EF01-2).